The primary structure comprises 618 residues: DNA mismatch repair protein MutL (618 aa).

This sequence belongs to the DNA mismatch repair MutL/HexB family.

This protein is involved in the repair of mismatches in DNA. It is required for dam-dependent methyl-directed DNA mismatch repair. May act as a 'molecular matchmaker', a protein that promotes the formation of a stable complex between two or more DNA-binding proteins in an ATP-dependent manner without itself being part of a final effector complex. In Porphyromonas gingivalis (strain ATCC BAA-308 / W83), this protein is DNA mismatch repair protein MutL.